Reading from the N-terminus, the 400-residue chain is Renin (400 aa).

The signal sequence occupies residues 1–23 (MDAWRGMPRWGLLLLLWGSCTFG). Positions 24-60 (LPTETTTFKRISLKRMPSIRESLKERGVDMARLGPER) are cleaved as a propeptide — activation peptide. An N-linked (GlcNAc...) asparagine glycan is attached at Asn-65. Positions 80 to 397 (YYGEIGIGTP…DRGNNRIGFA (318 aa)) constitute a Peptidase A1 domain. Residue Asp-98 is part of the active site. Cys-111 and Cys-118 are disulfide-bonded. N-linked (GlcNAc...) asparagine glycosylation is present at Asn-135. Cys-277 and Cys-281 are oxidised to a cystine. Asp-286 is an active-site residue. A disulfide bond links Cys-319 and Cys-356.

It belongs to the peptidase A1 family. Interacts with ATP6AP2.

The protein localises to the secreted. The protein resides in the membrane. It catalyses the reaction Cleavage of Leu-|-Xaa bond in angiotensinogen to generate angiotensin I.. Its activity is regulated as follows. Interaction with ATP6AP2 results in a 5-fold increased efficiency in angiotensinogen processing. In terms of biological role, renin is a highly specific endopeptidase, whose only known function is to generate angiotensin I from angiotensinogen in the plasma, initiating a cascade of reactions that produce an elevation of blood pressure and increased sodium retention by the kidney. The polypeptide is Renin (REN) (Callithrix jacchus (White-tufted-ear marmoset)).